Consider the following 43-residue polypeptide: Protein PsbN (43 aa).

A helical transmembrane segment spans residues 4–24 (GILVVIFISCLLVSFTGYTIY).

This sequence belongs to the PsbN family.

The protein localises to the plastid. It localises to the chloroplast thylakoid membrane. In terms of biological role, may play a role in photosystem I and II biogenesis. The chain is Protein PsbN from Chaetosphaeridium globosum (Charophycean green alga).